The primary structure comprises 159 residues: Ribosomal RNA large subunit methyltransferase H (159 aa).

Positions 76 and 108 each coordinate S-adenosyl-L-methionine.

Belongs to the RNA methyltransferase RlmH family. Homodimer.

The protein localises to the cytoplasm. The enzyme catalyses pseudouridine(1915) in 23S rRNA + S-adenosyl-L-methionine = N(3)-methylpseudouridine(1915) in 23S rRNA + S-adenosyl-L-homocysteine + H(+). Functionally, specifically methylates the pseudouridine at position 1915 (m3Psi1915) in 23S rRNA. This chain is Ribosomal RNA large subunit methyltransferase H, found in Pediococcus pentosaceus (strain ATCC 25745 / CCUG 21536 / LMG 10740 / 183-1w).